A 110-amino-acid polypeptide reads, in one-letter code: Small ribosomal subunit protein bS16 (110 aa).

The tract at residues 87-110 is disordered; the sequence is ARQNPIKAVPRKERKAQAEAAAKG.

The protein belongs to the bacterial ribosomal protein bS16 family.

This is Small ribosomal subunit protein bS16 from Bradyrhizobium sp. (strain BTAi1 / ATCC BAA-1182).